Reading from the N-terminus, the 278-residue chain is NAD kinase (278 aa).

Residue aspartate 67 is the Proton acceptor of the active site. NAD(+) contacts are provided by residues 67-68, arginine 72, 137-138, lysine 148, arginine 165, aspartate 167, 178-183, and glutamine 237; these read DG, NE, and TGYALS.

Belongs to the NAD kinase family. A divalent metal cation is required as a cofactor.

It is found in the cytoplasm. It carries out the reaction NAD(+) + ATP = ADP + NADP(+) + H(+). In terms of biological role, involved in the regulation of the intracellular balance of NAD and NADP, and is a key enzyme in the biosynthesis of NADP. Catalyzes specifically the phosphorylation on 2'-hydroxyl of the adenosine moiety of NAD to yield NADP. In Thermococcus gammatolerans (strain DSM 15229 / JCM 11827 / EJ3), this protein is NAD kinase.